The sequence spans 3023 residues: Genome polyprotein (3023 aa).

Positions 1–21 are enriched in basic residues; the sequence is MSTLPKPKRQTKRNTLRRPKN. At Ser-2 the chain carries N-acetylserine; by host. The interaction with STAT1 stretch occupies residues 2 to 23; that stretch reads STLPKPKRQTKRNTLRRPKNVK. The interval 2–58 is interaction with EIF2AK2/PKR; that stretch reads STLPKPKRQTKRNTLRRPKNVKFPAGGQIVGEVYVLPRRGPQLGVREVRKTSERSQP. An interaction with DDX3X region spans residues 2–59; that stretch reads STLPKPKRQTKRNTLRRPKNVKFPAGGQIVGEVYVLPRRGPQLGVREVRKTSERSQPR. The tract at residues 2–75 is disordered; it reads STLPKPKRQT…PKARPREGRS (74 aa). The Cytoplasmic portion of the chain corresponds to 2-168; the sequence is STLPKPKRQT…EDGVNYATGN (167 aa). 2 consecutive short sequence motifs (nuclear localization signal) follow at residues 5 to 13 and 38 to 43; these read PKPKRQTKR and PRRGPQ. Residues 47 to 57 are compositionally biased toward basic and acidic residues; the sequence is REVRKTSERSQ. Phosphoserine; by host is present on Ser-53. 2 consecutive short sequence motifs (nuclear localization signal) follow at residues 58 to 64 and 66 to 71; these read PRGRRQP and PKARPR. The interval 112 to 152 is important for endoplasmic reticulum and mitochondrial localization; sequence PRRRSRNLGKVIDTLTCGFADLMGYIPLIGAPVGGVARALA. Residue Ser-116 is modified to Phosphoserine; by host. The interaction with APOA2 stretch occupies residues 122 to 173; that stretch reads VIDTLTCGFADLMGYIPLIGAPVGGVARALAHGVRALEDGVNYATGNLPGCS. Residues 164–167 are important for lipid droplets localization; that stretch reads YATG. Residues 169-189 form a helical membrane-spanning segment; it reads LPGCSFSIFLLALFSCLTCPA. The propeptide at 178-191 is ER anchor for the core protein, removed in mature form by host signal peptidase; it reads LLALFSCLTCPASS. Residues 190 to 359 lie on the Lumenal side of the membrane; that stretch reads SSLEYRNASG…VGAHWGVMAG (170 aa). Asn-196, Asn-209, and Asn-235 each carry an N-linked (GlcNAc...) asparagine; by host glycan. An important for fusion region spans residues 266–297; sequence LVAPPTLCSALYVEDAFGAVSLVGQAFTFRPR. A glycan (N-linked (GlcNAc...) asparagine; by host) is linked at Asn-306. A helical membrane pass occupies residues 360 to 380; that stretch reads LAYFSMQGNWAKVVIVLIMFS. Residues 381-733 lie on the Lumenal side of the membrane; sequence GVDATTHTTG…WEFVVLVFLL (353 aa). An HVR1 region spans residues 386 to 413; the sequence is THTTGGSAAQATAGFTSFFTRGPSQNLQ. Residues Asn-418, Asn-424, and Asn-431 are each glycosylated (N-linked (GlcNAc...) (high mannose) asparagine; by host). 4 disulfide bridges follow: Cys-430–Cys-554, Cys-453–Cys-460, Cys-488–Cys-496, and Cys-505–Cys-510. N-linked (GlcNAc...) asparagine; by host glycosylation occurs at Asn-449. The tract at residues 476–480 is HVR2; the sequence is ANING. Asn-477 is a glycosylation site (N-linked (GlcNAc...) asparagine; by host). The segment at 482-495 is CD81-binding 1; sequence SEDRPYCWHYPPRP. Asn-534 carries N-linked (GlcNAc...) asparagine; by host glycosylation. The segment at 546-553 is CD81-binding 2; sequence PPQGRWFG. N-linked (GlcNAc...) asparagine; by host glycosylation occurs at Asn-558. Disulfide bonds link Cys-566-Cys-571, Cys-589-Cys-593, Cys-605-Cys-628, and Cys-615-Cys-652. Residues Asn-631 and Asn-653 are each glycosylated (N-linked (GlcNAc...) (high mannose) asparagine; by host). The cysteines at positions 660 and 685 are disulfide-linked. Positions 668–679 are PKR/eIF2-alpha phosphorylation homology domain (PePHD); that stretch reads SEQQPLLHSTTD. The helical transmembrane segment at 734 to 754 threads the bilayer; it reads LADARVCVALWMMLLISQAEA. Topologically, residues 755 to 765 are lumenal; the sequence is AMENLVMLNAL. A helical transmembrane segment spans residues 766 to 786; sequence SAAGQQGYVWYLVAFCAAWHI. The Cytoplasmic segment spans residues 787 to 790; it reads RGKL. The chain crosses the membrane as a helical span at residues 791 to 811; sequence VPLITYGLTGLWPLALLDLLL. The Lumenal portion of the chain corresponds to 812–821; that stretch reads PQRAYAWTGE. The chain crosses the membrane as a helical span at residues 822–842; sequence DDATIGAGVLLLLGFFTLSPW. The Cytoplasmic segment spans residues 843 to 889; that stretch reads YKHWIGRLIWWNQYAICRGEAALQVWVPPLLVRGSRDSVILLASLLY. The chain crosses the membrane as a helical span at residues 890-910; sequence PSLIFDITKLLIAVLGPLYLI. Positions 907-1034 constitute a Peptidase C18 domain; it reads LYLIQAALTS…DYKKMGWRLL (128 aa). Residues 911–936 are Lumenal-facing; it reads QAALTSTPYFVRAHVLIRICMLVRSA. Residues 912 to 1214 form a protease NS2-3 region; that stretch reads AALTSTPYFV…PVETLSTQVR (303 aa). Cys-930 carries the S-palmitoyl cysteine; by host lipid modification. A helical transmembrane segment spans residues 937–957; the sequence is MGGKYVQMAVLTVGRWFNTYL. The interaction with host SCPS1 stretch occupies residues 937–957; it reads MGGKYVQMAVLTVGRWFNTYL. Residues 958 to 1665 lie on the Cytoplasmic side of the membrane; that stretch reads YDHLSPIQDW…CMSADLEVTT (708 aa). Residues His-960, Glu-980, and Cys-1001 each act as for protease NS2 activity; shared with dimeric partner in the active site. The Peptidase S29 domain occupies 1035–1216; the sequence is SPISAYAQQT…ETLSTQVRSP (182 aa). Active-site charge relay system; for serine protease NS3 activity residues include His-1091 and Asp-1115. Zn(2+) contacts are provided by Cys-1131 and Cys-1133. The active-site Charge relay system; for serine protease NS3 activity is Ser-1173. Positions 1179 and 1183 each coordinate Zn(2+). A Helicase ATP-binding domain is found at 1225–1377; sequence PAVPESYQVG…PNIEEVGLTS (153 aa). 1238–1245 lines the ATP pocket; sequence APTGSGKS. Mg(2+) contacts are provided by Ser-1245 and Glu-1325. A DECH box motif is present at residues 1324 to 1327; it reads DECH. A Helicase C-terminal domain is found at 1387 to 1546; it reads ALPLAMIKGG…DLQPAETTVR (160 aa). An RNA-binding region spans residues 1494-1506; that stretch reads QRRGRTGRGRPGI. The chain crosses the membrane as a helical span at residues 1666-1686; sequence SAWVLVGGVLAALAAYCLSVG. The segment at 1687–1698 is NS3-binding; the sequence is CVVIVGHIELGG. The Cytoplasmic segment spans residues 1687–1813; it reads CVVIVGHIEL…SVTSPLTTNQ (127 aa). A helical membrane pass occupies residues 1814-1834; the sequence is TMFFNILGGWVATHLAGPAAS. At 1835–1836 the chain is on the lumenal side; the sequence is SA. A helical membrane pass occupies residues 1837 to 1857; sequence FVVSGLAGAAVGGIGIGRVLL. Position 1858 (Asp-1858) is a topological domain, cytoplasmic. A helical transmembrane segment spans residues 1859-1879; sequence VLAGYGAGVSGALVAFKIMGG. At 1880-1889 the chain is on the lumenal side; that stretch reads ELPTTEDMVN. The chain crosses the membrane as a helical span at residues 1890–1910; the sequence is LLPAILSPGALVVGVICAAVL. The Cytoplasmic portion of the chain corresponds to 1911-1980; it reads RRHVGPGEGA…WINEDYPSPC (70 aa). Residue Cys-1980 is the site of S-palmitoyl cysteine; by host attachment. The stretch at 1981-2010 is an intramembrane region; sequence NGDWLHDIWDWVCIVLSDFKTWLSAKIMPK. Over 2011–3002 the chain is Cytoplasmic; sequence VPGIPFLSCQ…YHSVSRARTR (992 aa). Zn(2+) contacts are provided by Cys-2019, Cys-2037, Cys-2039, and Cys-2060. Residues 2128-2216 form an FKBP8-binding region; the sequence is EFFTELDGVR…ASSSASQLSA (89 aa). The segment at 2128 to 2340 is transcriptional activation; sequence EFFTELDGVR…PVPPPRRKRT (213 aa). An interaction with non-structural protein 4A region spans residues 2143–2147; the sequence is PPCKP. Residues 2195–2218 show a composition bias toward low complexity; sequence ARRLARGSPPSEASSSASQLSAPS. Residues 2195 to 2226 are disordered; that stretch reads ARRLARGSPPSEASSSASQLSAPSLKATCQTH. Positions 2197–2450 are interaction with host SKP2; that stretch reads RLARGSPPSE…AIITPCSAEE (254 aa). A phosphoserine; by host mark is found at Ser-2202, Ser-2205, Ser-2209, Ser-2212, Ser-2215, and Ser-2218. Positions 2218–2257 are ISDR; that stretch reads SLKATCQTHRPHPDAELIDANLLWRQEMGSNITRVESETK. An interaction with EIF2AK2/PKR region spans residues 2218-2283; it reads SLKATCQTHR…TELSIPAECF (66 aa). An NS4B-binding region spans residues 2257–2314; that stretch reads KVVILDSFEPLRAEEDDTELSIPAECFKKPPKYPPALPIWARPDYNPPLLPSWKDPTY. The interval 2307 to 2385 is V3; sequence PSWKDPTYEP…GTESTAESGD (79 aa). 2 disordered regions span residues 2320–2344 and 2357–2422; these read HGCALPPTRPAPVPPPRRKRTIKLD and ERSF…STVS. The SH3-binding motif lies at 2330–2333; the sequence is APVP. A Nuclear localization signal motif is present at residues 2335 to 2343; the sequence is PRRKRTIKL. Over residues 2366–2384 the composition is skewed to low complexity; that stretch reads EGTGTSSSGVGTESTAESG. 2 positions are modified to phosphoserine; by host: Ser-2461 and Ser-2474. The RdRp catalytic domain occupies 2646–2764; that stretch reads PLGFSYDTRC…ISESCGVEED (119 aa). The Mg(2+) site is built by Asp-2652, Asp-2750, and Asp-2751. A helical transmembrane segment spans residues 3003 to 3023; sequence HLLLCLLLLTVGVGIFLLPAR.

This sequence belongs to the hepacivirus polyprotein family. Homooligomer. Interacts with E1 (via C-terminus). Interacts with the non-structural protein 5A. Interacts (via N-terminus) with host STAT1 (via SH2 domain); this interaction results in decreased STAT1 phosphorylation and ubiquitin-mediated proteasome-dependent STAT1 degradation, leading to decreased IFN-stimulated gene transcription. Interacts with host STAT3; this interaction constitutively activates STAT3. Interacts with host LTBR receptor. Interacts with host TNFRSF1A receptor and possibly induces apoptosis. Interacts with host HNRPK. Interacts with host YWHAE. Interacts with host UBE3A/E6AP. Interacts with host DDX3X. Interacts with host APOA2. Interacts with host RXRA protein. Interacts with host SP110 isoform 3/Sp110b; this interaction sequesters the transcriptional corepressor SP110 away from the nucleus. Interacts with host CREB3 nuclear transcription protein; this interaction triggers cell transformation. Interacts with host ACY3. Interacts with host C1QR1. Interacts with host RBM24; this interaction, which enhances the interaction of the mature core protein with 5'-UTR, may inhibit viral translation and favor replication. Interacts with host EIF2AK2/PKR; this interaction induces the autophosphorylation of EIF2AK2. Part of the viral assembly initiation complex composed of NS2, E1, E2, NS3, NS4A, NS5A and the mature core protein. As to quaternary structure, forms a heterodimer with envelope glycoprotein E2. Interacts with mature core protein. Interacts with protease NS2. The heterodimer E1/E2 interacts with host CLDN1; this interaction plays a role in viral entry into host cell. Interacts with host SPSB2 (via C-terminus). Part of the viral assembly initiation complex composed of NS2, E1, E2, NS3, NS4A, NS5A and the mature core protein. Interacts with host NEURL3; this interaction prevents E1 binding to glycoprotein E2. In terms of assembly, forms a heterodimer with envelope glycoprotein E1. Interacts with host CD81 and SCARB1 receptors; these interactions play a role in viral entry into host cell. Interacts with host EIF2AK2/PKR; this interaction inhibits EIF2AK2 and probably allows the virus to evade the innate immune response. Interacts with host CD209/DC-SIGN and CLEC4M/DC-SIGNR. Interact with host SPCS1; this interaction is essential for viral particle assembly. Interacts with protease NS2. The heterodimer E1/E2 interacts with host CLDN1; this interaction plays a role in viral entry into host cell. Part of the viral assembly initiation complex composed of NS2, E1, E2, NS3, NS4A, NS5A and the mature core protein. Interacts with host SLC3A2/4F2hc; the interaction may facilitate viral entry into host cell. Interacts with human PLSCR1. Homohexamer. Homoheptamer. Interacts with protease NS2. As to quaternary structure, homodimer. Interacts with host SPCS1; this interaction is essential for viral particle assembly. Interacts with envelope glycoprotein E1. Interacts with envelope glycoprotein E2. Interacts with viroporin p7. Interacts with serine protease/helicase NS3. Part of the replication complex composed of NS2, NS3, NS4A, NS4B, NS5A and the RNA-directed RNA polymerase embedded in an ER-derived membranous web. Part of the viral assembly initiation complex composed of NS2, E1, E2, NS3, NS4A, NS5A and the mature core protein. In terms of assembly, interacts with protease NS2. Interacts with non-structural protein 4A; this interaction stabilizes the folding of NS3 serine protease. NS3-NS4A interaction is essential for NS3 activation and allows membrane anchorage of the latter. NS3/NS4A complex also prevents phosphorylation of host IRF3, thus preventing the establishment of dsRNA induced antiviral state. Interacts with host MAVS; this interaction leads to the cleavage and inhibition of host MAVS. Interacts with host TICAM1; this interaction leads to the cleavage and inhibition of host TICAM1. Interacts with host TANK-binding kinase/TBK1; this interaction results in the inhibition of the association between TBK1 and IRF3, which leads to the inhibition of IRF3 activation. Interacts with host RBM24. Part of the replication complex composed of NS2, NS3, NS4A, NS4B, NS5A and the RNA-directed RNA polymerase embedded in an ER-derived membranous web. Part of the viral assembly initiation complex composed of NS2, E1, E2, NS3, NS4A, NS5A and the mature core protein. Interacts with NS3 serine protease; this interaction stabilizes the folding of NS3 serine protease. NS3-NS4A interaction is essential for NS3 activation and allows membrane anchorage of the latter. Interacts with non-structural protein 5A (via N-terminus). Part of the replication complex composed of NS2, NS3, NS4A, NS4B, NS5A and the RNA-directed RNA polymerase embedded in an ER-derived membranous web. Part of the viral assembly initiation complex composed of NS2, E1, E2, NS3, NS4A, NS5A and the mature core protein. As to quaternary structure, homomultimer. Interacts with non-structural protein NS5A. Interacts with host PLA2G4C; this interaction likely initiates the recruitment of replication complexes to lipid droplets. Interacts with host STING; this interaction disrupts the interaction between STING and TBK1 thereby suppressing the interferon signaling. Part of the replication complex composed of NS2, NS3, NS4A, NS4B, NS5A and the RNA-directed RNA polymerase embedded in an ER-derived membranous web. In terms of assembly, monomer. Homodimer; dimerization is required for RNA-binding. Interacts with the mature core protein. Interacts (via N-terminus) with non-structural protein 4A. Interacts with non-structural protein 4B. Interacts (via region D2) with RNA-directed RNA polymerase. Part of the viral assembly initiation complex composed of NS2, E1, E2, NS3, NS4A, NS5A and the mature core protein. Part of the replication complex composed of NS2, NS3, NS4A, NS4B, NS5A and the RNA-directed RNA polymerase embedded in an ER-derived membranous web. Interacts with host GRB2. Interacts with host BIN1. Interacts with host PIK3R1. Interacts with host SRCAP. Interacts with host FKBP8. Interacts (via C-terminus) with host VAPB (via MSP domain). Interacts with host EIF2AK2/PKR; this interaction leads to disruption of EIF2AK2 dimerization by NS5A and probably allows the virus to evade the innate immune response. Interacts (via N-terminus) with host PACSIN2 (via N-terminus); this interaction attenuates protein kinase C alpha-mediated phosphorylation of PACSIN2 by disrupting the interaction between PACSIN2 and PRKCA. Interacts (via N-terminus) with host SRC kinase (via SH2 domain). Interacts with most Src-family kinases. Interacts with host IFI27 and SKP2; promotes the ubiquitin-mediated proteasomal degradation of NS5A. Interacts with host GPS2. Interacts with host TNFRSF21; this interaction allows the modulation by the virus of JNK, p38 MAPK, STAT3, and Akt signaling pathways in a DR6-dependent manner. Interacts (via N-terminus) with host CIDEB (via N-terminus); this interaction seems to regulate the association of HCV particles with APOE. Interacts with host CHKA/Choline Kinase-alpha; CHKA bridges host PI4KA and NS5A and potentiates NS5A-stimulated PI4KA activity, which then facilitates the targeting of the ternary complex to the ER for viral replication. Interacts with host SPSB2 (via C-terminus); this interaction targets NS5A for ubiquitination and degradation. Interacts with host RAB18; this interaction may promote the association of NS5A and other replicase components with lipid droplets. Interacts (via region D2) with host PPIA/CYPA; the interaction stimulates RNA-binding ability of NS5A and is dependent on the peptidyl-prolyl cis-trans isomerase activity of PPIA/CYPA. Interacts with host TRIM14; this interaction induces the degradation of NS5A. Homooligomer. Interacts with non-structural protein 5A. Interacts with host VAPB. Interacts with host PRK2/PKN2. Interacts with host HNRNPA1 and SEPT6; these interactions facilitate viral replication. Part of the replication complex composed of NS2, NS3, NS4A, NS4B, NS5A and the RNA-directed RNA polymerase. Zn(2+) is required as a cofactor. It depends on Mg(2+) as a cofactor. Specific enzymatic cleavages in vivo yield mature proteins. The structural proteins, core, E1, E2 and p7 are produced by proteolytic processing by host signal peptidases. The core protein precursor is synthesized as a 23 kDa, which is retained in the ER membrane through the hydrophobic signal peptide. Cleavage by the signal peptidase releases the 21 kDa mature core protein. The cleavage of the core protein precursor occurs between aminoacids 176 and 188 but the exact cleavage site is not known. Some degraded forms of the core protein appear as well during the course of infection. The other proteins (p7, NS2, NS3, NS4A, NS4B, NS5A and NS5B) are cleaved by the viral proteases. Autoprocessing between NS2 and NS3 is mediated by the NS2 cysteine protease catalytic domain and regulated by the NS3 N-terminal domain. Post-translationally, phosphorylated by host PKC and PKA. In terms of processing, ubiquitinated; mediated by UBE3A and leading to core protein subsequent proteasomal degradation. Highly N-glycosylated. Post-translationally, palmitoylation is required for NS2/3 autoprocessing and E2 recruitment to membranes. In terms of processing, palmitoylated. This modification may play a role in its polymerization or in protein-protein interactions. Phosphorylated on serines in a basal form termed p56. p58 is a hyperphosphorylated form of p56. p56 and p58 coexist in the cell in roughly equivalent amounts. Hyperphosphorylation is dependent on the presence of NS4A. Host CSNK1A1/CKI-alpha or RPS6KB1 kinases may be responsible for NS5A phosphorylation. Post-translationally, tyrosine phosphorylation is essential for the interaction with host SRC. In terms of processing, the N-terminus is phosphorylated by host PRK2/PKN2.

The protein resides in the host endoplasmic reticulum membrane. It is found in the host mitochondrion membrane. It localises to the virion. Its subcellular location is the host cytoplasm. The protein localises to the host nucleus. The protein resides in the host lipid droplet. It is found in the virion membrane. It localises to the host mitochondrion. Its subcellular location is the host cell membrane. The protein localises to the host perinuclear region. It carries out the reaction Hydrolysis of four peptide bonds in the viral precursor polyprotein, commonly with Asp or Glu in the P6 position, Cys or Thr in P1 and Ser or Ala in P1'.. The catalysed reaction is a ribonucleoside 5'-triphosphate + H2O = a ribonucleoside 5'-diphosphate + phosphate + H(+). The enzyme catalyses ATP + H2O = ADP + phosphate + H(+). It catalyses the reaction RNA(n) + a ribonucleoside 5'-triphosphate = RNA(n+1) + diphosphate. With respect to regulation, inhibited by the antiviral drug hexamethylene amiloride. Inhibition by amantadine appears to be genotype-dependent. Also inhibited by long-alkyl-chain iminosugar derivatives. Activity is up-regulated by PRK2/PKN2-mediated phosphorylation. Packages viral RNA to form a viral nucleocapsid, and promotes virion budding. Participates in the viral particle production as a result of its interaction with the non-structural protein 5A. Binds RNA and may function as a RNA chaperone to induce the RNA structural rearrangements taking place during virus replication. Modulates viral translation initiation by interacting with viral IRES and 40S ribosomal subunit. Affects various cell signaling pathways, host immunity and lipid metabolism. Prevents the establishment of cellular antiviral state by blocking the interferon-alpha/beta (IFN-alpha/beta) and IFN-gamma signaling pathways and by blocking the formation of phosphorylated STAT1 and promoting ubiquitin-mediated proteasome-dependent degradation of STAT1. Activates STAT3 leading to cellular transformation. Regulates the activity of cellular genes, including c-myc and c-fos. May repress the promoter of p53, and sequester CREB3 and SP110 isoform 3/Sp110b in the cytoplasm. Represses cell cycle negative regulating factor CDKN1A, thereby interrupting an important check point of normal cell cycle regulation. Targets transcription factors involved in the regulation of inflammatory responses and in the immune response: suppresses TNF-induced NF-kappa-B activation, and activates AP-1. Binds to dendritic cells (DCs) via C1QR1, resulting in down-regulation of T-lymphocytes proliferation. Alters lipid metabolism by interacting with hepatocellular proteins involved in lipid accumulation and storage. Induces up-regulation of FAS promoter activity, and thereby contributes to the increased triglyceride accumulation in hepatocytes (steatosis). Its function is as follows. Forms a heterodimer with envelope glycoprotein E2, which mediates virus attachment to the host cell, virion internalization through clathrin-dependent endocytosis and fusion with host membrane. Fusion with the host cell is most likely mediated by both E1 and E2, through conformational rearrangements of the heterodimer required for fusion rather than a classical class II fusion mechanism. E1/E2 heterodimer binds host apolipoproteins such as APOB and ApoE thereby forming a lipo-viro-particle (LVP). APOE associated to the LVP allows the initial virus attachment to cell surface receptors such as the heparan sulfate proteoglycans (HSPGs), syndecan-1 (SDC1), syndecan-1 (SDC2), the low-density lipoprotein receptor (LDLR) and scavenger receptor class B type I (SCARB1). The cholesterol transfer activity of SCARB1 allows E2 exposure and binding of E2 to SCARB1 and the tetraspanin CD81. E1/E2 heterodimer binding on CD81 activates the epithelial growth factor receptor (EGFR) signaling pathway. Diffusion of the complex E1-E2-EGFR-SCARB1-CD81 to the cell lateral membrane allows further interaction with Claudin 1 (CLDN1) and occludin (OCLN) to finally trigger HCV entry. Functionally, forms a heterodimer with envelope glycoprotein E1, which mediates virus attachment to the host cell, virion internalization through clathrin-dependent endocytosis and fusion with host membrane. Fusion with the host cell is most likely mediated by both E1 and E2, through conformational rearrangements of the heterodimer required for fusion rather than a classical class II fusion mechanism. The interaction between envelope glycoprotein E2 and host apolipoprotein E/APOE allows the proper assembly, maturation and infectivity of the viral particles. This interaction is probably promoted via the up-regulation of cellular autophagy by the virus. E1/E2 heterodimer binds host apolipoproteins such as APOB and APOE thereby forming a lipo-viro-particle (LVP). APOE associated to the LVP allows the initial virus attachment to cell surface receptors such as the heparan sulfate proteoglycans (HSPGs), syndecan-1 (SDC1), syndecan-1 (SDC2), the low-density lipoprotein receptor (LDLR) and scavenger receptor class B type I (SCARB1). The cholesterol transfer activity of SCARB1 allows E2 exposure and binding of E2 to SCARB1 and the tetraspanin CD81. E1/E2 heterodimer binding on CD81 activates the epithelial growth factor receptor (EGFR) signaling pathway. Diffusion of the complex E1-E2-EGFR-SCARB1-CD81 to the cell lateral membrane allows further interaction with Claudin 1 (CLDN1) and occludin (OCLN) to finally trigger HCV entry. Inhibits host EIF2AK2/PKR activation, preventing the establishment of an antiviral state. Viral ligand for CD209/DC-SIGN and CLEC4M/DC-SIGNR, which are respectively found on dendritic cells (DCs), and on liver sinusoidal endothelial cells and macrophage-like cells of lymph node sinuses. These interactions allow the capture of circulating HCV particles by these cells and subsequent facilitated transmission to permissive cells such as hepatocytes and lymphocyte subpopulations. The interaction between E2 and host amino acid transporter complex formed by SLC3A2 and SLC7A5/LAT1 may facilitate viral entry into host cell. In terms of biological role, ion channel protein that acts as a viroporin and plays an essential role in the assembly, envelopment and secretion of viral particles. Regulates the host cell secretory pathway, which induces the intracellular retention of viral glycoproteins and favors assembly of viral particles. Creates a pore in acidic organelles and releases Ca(2+) and H(+) in the cytoplasm of infected cells, leading to a productive viral infection. High levels of cytoplasmic Ca(2+) may trigger membrane trafficking and transport of viral ER-associated proteins to viroplasms, sites of viral genome replication. This ionic imbalance induces the assembly of the inflammasome complex, which triggers the maturation of pro-IL-1beta into IL-1beta through the action of caspase-1. Targets also host mitochondria and induces mitochondrial depolarization. In addition of its role as a viroporin, acts as a lipid raft adhesion factor. Cysteine protease required for the proteolytic auto-cleavage between the non-structural proteins NS2 and NS3. The N-terminus of NS3 is required for the function of NS2 protease (active region NS2-3). Promotes the initiation of viral particle assembly by mediating the interaction between structural and non-structural proteins. Its function is as follows. Displays three enzymatic activities: serine protease with a chymotrypsin-like fold, NTPase and RNA helicase. NS3 serine protease, in association with NS4A, is responsible for the cleavages of NS3-NS4A, NS4A-NS4B, NS4B-NS5A and NS5A-NS5B. The NS3/NS4A complex prevents phosphorylation of host IRF3, thus preventing the establishment of dsRNA induced antiviral state. The NS3/NS4A complex induces host amino acid transporter component SLC3A2, thus contributing to HCV propagation. NS3 RNA helicase binds to RNA and unwinds both dsDNA and dsRNA in the 3' to 5' direction, and likely resolves RNA complicated stable secondary structures in the template strand. Binds a single ATP and catalyzes the unzipping of a single base pair of dsRNA. Inhibits host antiviral proteins TBK1 and IRF3 thereby preventing the establishment of an antiviral state. Cleaves host MAVS/CARDIF thereby preventing the establishment of an antiviral state. Cleaves host TICAM1/TRIF, thereby disrupting TLR3 signaling and preventing the establishment of an antiviral state. Functionally, peptide cofactor which forms a non-covalent complex with the N-terminal of NS3 serine protease. The NS3/NS4A complex prevents phosphorylation of host IRF3, thus preventing the establishment of dsRNA induced antiviral state. The NS3/NS4A complex induces host amino acid transporter component SLC3A2, thus contributing to HCV propagation. In terms of biological role, induces a specific membrane alteration that serves as a scaffold for the virus replication complex. This membrane alteration gives rise to the so-called ER-derived membranous web that contains the replication complex. NS4B self-interaction contributes to its function in membranous web formation. Promotes host TRIF protein degradation in a CASP8-dependent manner thereby inhibiting host TLR3-mediated interferon signaling. Disrupts the interaction between STING and TBK1 contributing to the inhibition of interferon signaling. Phosphorylated protein that is indispensable for viral replication and assembly. Both hypo- and hyperphosphorylated states are required for the viral life cycle. The hyperphosphorylated form of NS5A is an inhibitor of viral replication. Involved in RNA-binding and especially in binding to the viral genome. Zinc is essential for RNA-binding. Participates in the viral particle production as a result of its interaction with the mature viral core protein. Its interaction with host VAPB may target the viral replication complex to vesicles. Down-regulates viral IRES translation initiation. Mediates interferon resistance, presumably by interacting with and inhibiting host EIF2AK2/PKR. Prevents BIN1-induced apoptosis. Acts as a transcriptional activator of some host genes important for viral replication when localized in the nucleus. Via the interaction with host PACSIN2, modulates lipid droplet formation in order to promote virion assembly. Modulates TNFRSF21/DR6 signaling pathway for viral propagation. Its function is as follows. RNA-dependent RNA polymerase that performs primer-template recognition and RNA synthesis during viral replication. Initiates RNA transcription/replication at a flavin adenine dinucleotide (FAD), resulting in a 5'- FAD cap on viral RNAs. In this way, recognition of viral 5' RNA by host pattern recognition receptors can be bypassed, thereby evading activation of antiviral pathways. The sequence is that of Genome polyprotein from Homo sapiens (Human).